A 153-amino-acid polypeptide reads, in one-letter code: MVKLVLVNPQIPPNTGNIARTCAATGTELHLVGPLGFELGDRYLKRAGLDYWPYVDLHYHNSCEEFITHWRGQGGNLLGFSVTGTVNFWDYTYQSTDWLMMGSETDGLPQMMRDLSTQLLCIPMPHSEVRSLNLASSAAIALFEAGRQLRSLG.

Gly102, Ile122, and Ser131 together coordinate S-adenosyl-L-methionine.

It belongs to the class IV-like SAM-binding methyltransferase superfamily. RNA methyltransferase TrmH family. TrmL subfamily.

The protein localises to the cytoplasm. The enzyme catalyses cytidine(34) in tRNA + S-adenosyl-L-methionine = 2'-O-methylcytidine(34) in tRNA + S-adenosyl-L-homocysteine + H(+). It catalyses the reaction 5-carboxymethylaminomethyluridine(34) in tRNA(Leu) + S-adenosyl-L-methionine = 5-carboxymethylaminomethyl-2'-O-methyluridine(34) in tRNA(Leu) + S-adenosyl-L-homocysteine + H(+). Could methylate the ribose at the nucleotide 34 wobble position in tRNA. In Synechocystis sp. (strain ATCC 27184 / PCC 6803 / Kazusa), this protein is Putative tRNA (cytidine(34)-2'-O)-methyltransferase.